The chain runs to 339 residues: Lipoyl synthase (339 aa).

Residues 13 to 35 (RPKLDAPARPRHPEKAHRPDTAI) form a disordered region. 7 residues coordinate [4Fe-4S] cluster: Cys-68, Cys-73, Cys-79, Cys-94, Cys-98, Cys-101, and Ser-307. Residues 80-296 (WEKRHATFMI…ETTAYAKGFL (217 aa)) enclose the Radical SAM core domain.

This sequence belongs to the radical SAM superfamily. Lipoyl synthase family. [4Fe-4S] cluster serves as cofactor.

The protein localises to the cytoplasm. The catalysed reaction is [[Fe-S] cluster scaffold protein carrying a second [4Fe-4S](2+) cluster] + N(6)-octanoyl-L-lysyl-[protein] + 2 oxidized [2Fe-2S]-[ferredoxin] + 2 S-adenosyl-L-methionine + 4 H(+) = [[Fe-S] cluster scaffold protein] + N(6)-[(R)-dihydrolipoyl]-L-lysyl-[protein] + 4 Fe(3+) + 2 hydrogen sulfide + 2 5'-deoxyadenosine + 2 L-methionine + 2 reduced [2Fe-2S]-[ferredoxin]. The protein operates within protein modification; protein lipoylation via endogenous pathway; protein N(6)-(lipoyl)lysine from octanoyl-[acyl-carrier-protein]: step 2/2. Catalyzes the radical-mediated insertion of two sulfur atoms into the C-6 and C-8 positions of the octanoyl moiety bound to the lipoyl domains of lipoate-dependent enzymes, thereby converting the octanoylated domains into lipoylated derivatives. In Methylorubrum extorquens (strain CM4 / NCIMB 13688) (Methylobacterium extorquens), this protein is Lipoyl synthase.